The following is a 357-amino-acid chain: Protein Wnt-5b (357 aa).

A signal peptide spans 1–18 (MPGIRLLLAAALLCCPPP). The cysteines at positions 81 and 92 are disulfide-linked. N-linked (GlcNAc...) asparagine glycosylation is found at Asn91 and Asn97. Cystine bridges form between Cys131–Cys139, Cys141–Cys159, Cys215–Cys229, Cys217–Cys224, Cys286–Cys317, Cys302–Cys312, Cys316–Cys356, Cys332–Cys347, Cys334–Cys344, and Cys339–Cys340. A lipid anchor (O-palmitoleoyl serine; by PORCN) is attached at Ser221. N-linked (GlcNAc...) asparagine glycosylation is found at Asn289 and Asn303.

The protein belongs to the Wnt family. Post-translationally, palmitoleoylation is required for efficient binding to frizzled receptors. Depalmitoleoylation leads to Wnt signaling pathway inhibition. In terms of tissue distribution, predominantly in neuroectodermal tissues.

It localises to the secreted. The protein resides in the extracellular space. The protein localises to the extracellular matrix. Its function is as follows. Ligand for members of the frizzled family of seven transmembrane receptors. Probable developmental protein. May be a signaling molecule which affects the development of discrete regions of tissues. Is likely to signal over only few cell diameters. The chain is Protein Wnt-5b (WNT-5B) from Ambystoma mexicanum (Axolotl).